Reading from the N-terminus, the 209-residue chain is Probable septum site-determining protein MinC (209 aa).

The protein belongs to the MinC family. Interacts with MinD and FtsZ.

Functionally, cell division inhibitor that blocks the formation of polar Z ring septums. Rapidly oscillates between the poles of the cell to destabilize FtsZ filaments that have formed before they mature into polar Z rings. Prevents FtsZ polymerization. The protein is Probable septum site-determining protein MinC of Clostridium kluyveri (strain NBRC 12016).